We begin with the raw amino-acid sequence, 1154 residues long: PAN2-PAN3 deadenylation complex catalytic subunit pan2 (1154 aa).

WD repeat units lie at residues 20–59 (GLPTVATTIAFDDVSELLWAGNEYGRITSFYGPELQRYTS), 102–145 (THDE…DKLR), and 276–315 (ATVSFMLGIEISPSGEALAINDAECFIQLWGSPAKIHFNE). A linker region spans residues 316-451 (MSKEVEFADV…GARISGESED (136 aa)). Positions 452-821 (DPLLKYSNVE…SPCVLAFQVR (370 aa)) constitute a USP domain. The 179-residue stretch at 870-1048 (VALDTEFVDL…IEDARMALRL (179 aa)) folds into the Exonuclease domain. A divalent metal cation-binding residues include aspartate 873, glutamate 875, aspartate 982, and aspartate 1041. The tract at residues 1092–1154 (PGTAVTMQNN…GEFFTGSPLK (63 aa)) is disordered. Polar residues-rich tracts occupy residues 1096–1109 (VTMQNNSGRNTPST) and 1132–1141 (LTPSNGTFSG).

Belongs to the peptidase C19 family. PAN2 subfamily. As to quaternary structure, forms a heterotrimer with an asymmetric homodimer of the regulatory subunit pan3 to form the poly(A)-nuclease (PAN) deadenylation complex. A divalent metal cation serves as cofactor.

The protein resides in the cytoplasm. The enzyme catalyses Exonucleolytic cleavage of poly(A) to 5'-AMP.. Its activity is regulated as follows. Positively regulated by the regulatory subunit pan3. In terms of biological role, catalytic subunit of the poly(A)-nuclease (PAN) deadenylation complex, one of two cytoplasmic mRNA deadenylases involved in mRNA turnover. PAN specifically shortens poly(A) tails of RNA and the activity is stimulated by poly(A)-binding protein pab1. PAN deadenylation is followed by rapid degradation of the shortened mRNA tails by the CCR4-NOT complex. Deadenylated mRNAs are then degraded by two alternative mechanisms, namely exosome-mediated 3'-5' exonucleolytic degradation, or deadenylation-dependent mRNA decaping and subsequent 5'-3' exonucleolytic degradation by xrn1. May also be involved in post-transcriptional maturation of mRNA poly(A) tails. In Emericella nidulans (strain FGSC A4 / ATCC 38163 / CBS 112.46 / NRRL 194 / M139) (Aspergillus nidulans), this protein is PAN2-PAN3 deadenylation complex catalytic subunit pan2.